The primary structure comprises 379 residues: Small ribosomal subunit protein uS2cy (379 aa).

Positions 1-94 (MKLVQFFEIG…MGTSSNRAKS (94 aa)) are N-terminal extension. The tract at residues 83-106 (NQMGTSSNRAKSTDTPAVSTSQNV) is disordered.

It belongs to the universal ribosomal protein uS2 family.

It localises to the plastid. It is found in the chloroplast. This is Small ribosomal subunit protein uS2cy (rps2-2) from Tetradesmus obliquus (Green alga).